The chain runs to 86 residues: Sugar transporter SemiSWEET (86 aa).

A run of 3 helical transmembrane segments spans residues 3–23 (PFLI…AYAP), 37–57 (ISLG…IYGL), and 61–81 (DAPL…ILVM). The PQ-loop domain maps to 6–63 (IKLIGFAAATCTTVAYAPQFIKVLKTRSARDISLGMFLVMVLGLALWLIYGLLSGDAP).

As to quaternary structure, homodimer. Homooligomer.

It is found in the cell membrane. In terms of biological role, mediates sucrose transmembrane transport down a concentration gradient. This is Sugar transporter SemiSWEET from Bradyrhizobium diazoefficiens (strain JCM 10833 / BCRC 13528 / IAM 13628 / NBRC 14792 / USDA 110).